Here is a 546-residue protein sequence, read N- to C-terminus: Histidine--tRNA ligase, mitochondrial (546 aa).

A mitochondrion-targeting transit peptide spans 1–20 (MLSRSLNKVVTSIKSSSIIR). L-histidine contacts are provided by residues 129-131 (DLT), Arg-156, Gln-172, Asp-176, Arg-326, and 330-331 (YY).

It belongs to the class-II aminoacyl-tRNA synthetase family.

The protein localises to the cytoplasm. It is found in the mitochondrion. The catalysed reaction is tRNA(His) + L-histidine + ATP = L-histidyl-tRNA(His) + AMP + diphosphate + H(+). Catalyzes the aminoacylation of histidyl-tRNA in both the cytoplasm and the mitochondrion. This is Histidine--tRNA ligase, mitochondrial (HTS1) from Saccharomyces cerevisiae (strain ATCC 204508 / S288c) (Baker's yeast).